Reading from the N-terminus, the 82-residue chain is Small ribosomal subunit protein bS16 (82 aa).

It belongs to the bacterial ribosomal protein bS16 family.

The chain is Small ribosomal subunit protein bS16 from Pectobacterium carotovorum subsp. carotovorum (strain PC1).